The sequence spans 420 residues: DNA primase small subunit (420 aa).

Methionine 1 bears the N-acetylmethionine mark. Residues glutamate 44, aspartate 109, and aspartate 111 contribute to the active site. Mg(2+) contacts are provided by aspartate 109 and aspartate 111. Residues aspartate 109 and aspartate 111 each contribute to the Mn(2+) site. 109-111 (DID) contributes to the a ribonucleoside 5'-triphosphate binding site. Zn(2+) contacts are provided by cysteine 121, cysteine 122, cysteine 128, and cysteine 131. The short motif at 121-131 (CCSSADICPKC) is the Zinc knuckle motif element. 160–166 (SGRRGVH) contacts a ribonucleoside 5'-triphosphate. Aspartate 306 lines the Mg(2+) pocket. Aspartate 306 is a binding site for Mn(2+). A ribonucleoside 5'-triphosphate contacts are provided by residues 315 to 318 (HLLK) and histidine 324. Over residues 363 to 373 (NEEEKEENEAE) the composition is skewed to acidic residues. Residues 363–382 (NEEEKEENEAESDVKHRTRD) form a disordered region.

It belongs to the eukaryotic-type primase small subunit family. In terms of assembly, heterodimer of a catalytic subunit PRIM1 and a regulatory subunit PRIM2, also known as the DNA primase complex. Interacts with PRIM2 (via C-terminus). Component of the alpha DNA polymerase complex (also known as the alpha DNA polymerase-primase complex) consisting of four subunits: the catalytic subunit POLA1, the regulatory subunit POLA2, and the primase complex subunits PRIM1 and PRIM2 respectively. Within the complex, POLA1 directly interacts with PRIM2. Requires Mg(2+) as cofactor. Mn(2+) is required as a cofactor.

It catalyses the reaction ssDNA + n NTP = ssDNA/pppN(pN)n-1 hybrid + (n-1) diphosphate.. The presence of the regulatory subunit PRIM2/p58 accelerates the kinetics of initiation and primer extension. Inhibited by arabinose nucleoside derivatives such as fludarabine and vidarabine. In terms of biological role, catalytic subunit of the DNA primase complex and component of the DNA polymerase alpha complex (also known as the alpha DNA polymerase-primase complex - primosome/replisome) which play an essential role in the initiation of DNA synthesis. During the S phase of the cell cycle, the DNA polymerase alpha complex (composed of a catalytic subunit POLA1, an accessory subunit POLA2 and two primase subunits, the catalytic subunit PRIM1 and the regulatory subunit PRIM2) is recruited to DNA at the replicative forks via direct interactions with MCM10 and WDHD1. The primase subunit of the polymerase alpha complex initiates DNA synthesis by oligomerising short RNA primers on both leading and lagging strands. These primers are initially extended by the polymerase alpha catalytic subunit and subsequently transferred to polymerase delta and polymerase epsilon for processive synthesis on the lagging and leading strand, respectively. In the primase complex, both subunits are necessary for the initial di-nucleotide formation, but the extension of the primer depends only on the catalytic subunit. Synthesizes 9-mer RNA primers (also known as the 'unit length' RNA primers). Incorporates only ribonucleotides in the presence of ribo- and deoxy-nucleotide triphosphates (rNTPs, dNTPs). Requires template thymine or cytidine to start the RNA primer synthesis, with an adenine or guanine at its 5'-end. Binds single stranded DNA. This chain is DNA primase small subunit (PRIM1), found in Homo sapiens (Human).